The primary structure comprises 660 residues: Alpha-1,2-mannosyltransferase MNN21 (660 aa).

Residues 1–17 lie on the Cytoplasmic side of the membrane; that stretch reads MFQQLTYRLRLFRRRHK. A helical transmembrane segment spans residues 18–38; that stretch reads YIFINSIFLSVIIIFLIYSYW. The Extracellular portion of the chain corresponds to 39–660; the sequence is SNLPAEDNSA…FLESTQNITD (622 aa). Residues 75-125 form a disordered region; the sequence is PFEEKKPQVNPNNNQEVGVESGASEISQHKQQQQQQQHAKEPTTKTSSKSL. An N-linked (GlcNAc...) asparagine glycan is attached at N657.

Belongs to the MNN1/MNT family.

It localises to the golgi apparatus membrane. Its pathway is protein modification; protein glycosylation. Alpha-1,2-mannosyltransferase required for cell wall integrity. Responsible for addition of the first alpha-1,2-linked mannose to form the branches on the mannan backbone of oligosaccharides. Addition of alpha-1,2-mannose is required for stabilization of the alpha-1,6-mannose backbone and hence regulates mannan fibril length; and is important for both immune recognition and virulence. This is Alpha-1,2-mannosyltransferase MNN21 (MNN21) from Candida albicans (strain SC5314 / ATCC MYA-2876) (Yeast).